The primary structure comprises 180 residues: uncharacterized protein (180 aa).

Belongs to the CdaR family.

This is an uncharacterized protein from Thermomonospora curvata.